The chain runs to 113 residues: Protein FMC1 homolog (113 aa).

Residues 94–113 (SAGLVGLKLPHQPGGKGWEP) are disordered.

This sequence belongs to the FMC1 family. In terms of assembly, interacts with ATPAF2.

It is found in the mitochondrion. Plays a role in the assembly/stability of the mitochondrial membrane ATP synthase (F(1)F(0) ATP synthase or Complex V). This Homo sapiens (Human) protein is Protein FMC1 homolog.